Here is a 395-residue protein sequence, read N- to C-terminus: MIISAASDYRAAAQRILPPFLFHYIDGGAYSEHTLRRNVEDLSEVALRQRVLKNMSDLSLETKLFNETLSMPVALAPVGLCGMYARRGEVQAAAAADARGIPFTLSTVSVCPIEEVAPTIKRPMWFQLYVLRDRGFMRNALERAKAAGCSTLVFTVDMPTPGARYRDAHSGMSGANAAMRRYWQAVTHPQWAWDVGVNGRPHDLGNISAYLGKPTGLEDYIGWLANNFDPSISWKDLEWIREFWDGPMVIKGILDPEDARDAVRFGADGIVVSNHGGRQLDGVLSSARALPAIADAVKGDIAILADSGIRNGLDVVRMIALGADSVLLGRAYLYALATHGQAGVANLLNLIEKEMKVAMTLTGAKTISEISKDSLVQELSRIPSGLAPLAQGTAA.

The FMN hydroxy acid dehydrogenase domain occupies 1–380 (MIISAASDYR…SKDSLVQELS (380 aa)). Residue Y24 coordinates substrate. S106 and Q127 together coordinate FMN. Residue Y129 participates in substrate binding. Position 155 (T155) interacts with FMN. Position 164 (R164) interacts with substrate. K251 contacts FMN. The active-site Proton acceptor is H275. R278 lines the substrate pocket. 306-330 (DSGIRNGLDVVRMIALGADSVLLGR) is an FMN binding site.

It belongs to the FMN-dependent alpha-hydroxy acid dehydrogenase family. It depends on FMN as a cofactor.

The protein localises to the cell inner membrane. The enzyme catalyses (S)-lactate + A = pyruvate + AH2. Its function is as follows. Catalyzes the conversion of L-lactate to pyruvate. Is coupled to the respiratory chain. The chain is L-lactate dehydrogenase from Enterobacter sp. (strain 638).